The chain runs to 541 residues: Eukaryotic translation initiation factor 3 subunit L (541 aa).

The region spanning 308 to 516 (TFSDILLYIQ…IHIADTKVSH (209 aa)) is the PCI domain.

Belongs to the eIF-3 subunit L family. In terms of assembly, component of the eukaryotic translation initiation factor 3 (eIF-3) complex. The eIF-3 complex interacts with pix.

Its subcellular location is the cytoplasm. Functionally, component of the eukaryotic translation initiation factor 3 (eIF-3) complex, which is involved in protein synthesis of a specialized repertoire of mRNAs and, together with other initiation factors, stimulates binding of mRNA and methionyl-tRNAi to the 40S ribosome. The eIF-3 complex specifically targets and initiates translation of a subset of mRNAs involved in cell proliferation. This Drosophila persimilis (Fruit fly) protein is Eukaryotic translation initiation factor 3 subunit L.